A 586-amino-acid polypeptide reads, in one-letter code: Assimilatory ferredoxin-dependent nitrite reductase (586 aa).

[4Fe-4S] cluster is bound by residues Cys411, Cys417, Cys455, and Cys459. Position 459 (Cys459) interacts with siroheme. The disordered stretch occupies residues 566–586 (SWYPFADEDEPPKTEQPMTSD).

Belongs to the nitrite and sulfite reductase 4Fe-4S domain family. As to quaternary structure, monomer. Siroheme serves as cofactor. The cofactor is [4Fe-4S] cluster.

The enzyme catalyses 6 oxidized [2Fe-2S]-[ferredoxin] + NH4(+) + 2 H2O = nitrite + 6 reduced [2Fe-2S]-[ferredoxin] + 8 H(+). Its pathway is nitrogen metabolism; nitrate reduction (assimilation). Its activity is regulated as follows. Inhibited by cyanide and azide. Catalyzes the reduction of nitrite to ammonium in the nitrate assimilation pathway, using ferredoxin as the electron donor. Can use reduced methyl viologen but neither NADPH nor NADH as electron donors. This Haloferax mediterranei (strain ATCC 33500 / DSM 1411 / JCM 8866 / NBRC 14739 / NCIMB 2177 / R-4) (Halobacterium mediterranei) protein is Assimilatory ferredoxin-dependent nitrite reductase.